A 643-amino-acid polypeptide reads, in one-letter code: Melanoma-associated antigen C3 (643 aa).

MAGE domains are found at residues 184–384 and 456–643; these read LDEK…AAGM and LDEK…FCPE. Positions 347–421 are disordered; sequence NPQGLAGHRQ…PQSPLDSCSS (75 aa). A compositionally biased stretch (basic and acidic residues) spans 354-363; the sequence is HRQEDGRRGL. Residues 383–414 are compositionally biased toward pro residues; sequence GMPPLPQSPPEIPPQGPPKISPQGPPQSPPQS. Residues threonine 478, threonine 484, and threonine 485 each carry the phosphothreonine modification.

In terms of tissue distribution, expressed in testis. Not expressed in other normal tissues, but is expressed in tumors of different histological origins.

This chain is Melanoma-associated antigen C3 (MAGEC3), found in Homo sapiens (Human).